A 470-amino-acid chain; its full sequence is Protein nucleotidyltransferase YdiU (470 aa).

8 residues coordinate ATP: G86, G88, R89, K109, D121, G122, R172, and R179. The Proton acceptor role is filled by D244. 2 residues coordinate Mg(2+): N245 and D254. Position 254 (D254) interacts with ATP.

The protein belongs to the SELO family. The cofactor is Mg(2+). It depends on Mn(2+) as a cofactor.

It catalyses the reaction L-seryl-[protein] + ATP = 3-O-(5'-adenylyl)-L-seryl-[protein] + diphosphate. It carries out the reaction L-threonyl-[protein] + ATP = 3-O-(5'-adenylyl)-L-threonyl-[protein] + diphosphate. The catalysed reaction is L-tyrosyl-[protein] + ATP = O-(5'-adenylyl)-L-tyrosyl-[protein] + diphosphate. The enzyme catalyses L-histidyl-[protein] + UTP = N(tele)-(5'-uridylyl)-L-histidyl-[protein] + diphosphate. It catalyses the reaction L-seryl-[protein] + UTP = O-(5'-uridylyl)-L-seryl-[protein] + diphosphate. It carries out the reaction L-tyrosyl-[protein] + UTP = O-(5'-uridylyl)-L-tyrosyl-[protein] + diphosphate. Functionally, nucleotidyltransferase involved in the post-translational modification of proteins. It can catalyze the addition of adenosine monophosphate (AMP) or uridine monophosphate (UMP) to a protein, resulting in modifications known as AMPylation and UMPylation. This chain is Protein nucleotidyltransferase YdiU, found in Roseobacter denitrificans (strain ATCC 33942 / OCh 114) (Erythrobacter sp. (strain OCh 114)).